The following is a 352-amino-acid chain: PhoH-like protein (352 aa).

Positions 1–21 (MTSRETRAADAAGARQADAQV) are disordered. Residues 9–20 (ADAAGARQADAQ) show a composition bias toward low complexity. 150 to 157 (GPAGTGKT) contacts ATP.

This sequence belongs to the PhoH family.

It localises to the cytoplasm. The polypeptide is PhoH-like protein (Mycobacterium bovis (strain ATCC BAA-935 / AF2122/97)).